Consider the following 165-residue polypeptide: MANQGKKPTRRSERALAFQVLYGLSFTPATSEGALRAAYAASPDVADRNAEDEKADRQAPATAPQGYAWEVIHGVWKTQAELDEAVSGFSQNWRVERMGRVELTLLRIAVYEMLFRDDVPAKVAMNEAIELSKQFGDDNSRGFINGILDAVARAVESGRLTPKGQ.

This sequence belongs to the NusB family.

Involved in transcription antitermination. Required for transcription of ribosomal RNA (rRNA) genes. Binds specifically to the boxA antiterminator sequence of the ribosomal RNA (rrn) operons. The protein is Transcription antitermination protein NusB of Nitratidesulfovibrio vulgaris (strain DSM 19637 / Miyazaki F) (Desulfovibrio vulgaris).